Reading from the N-terminus, the 428-residue chain is MRVVILGSGVVGVASAYYLARAGHEVTVIDREAGPALDTSFANAGQISPGYAAPWAAPGVPLKAVKWMFEKHAPLAIRLDGTRFQLQWMWQMLRNCTTERYALNKGRMVRLAEYSRDCLQALRAETAIQYEGRTGGTLQVFRTQQQLDGAAKDIAVLREANVPFELLSSDELKKAEPALAAVSHKLTGGLRLPGDETGDCQLFTTRLAALAEQLGVKFRFNTRIDALAVAGGKIAGVQCGGEMVRADAYVVALGSYSTNLVASLVKIPVYPLKGYSITAPIVDAAKAPVSTVLDETYKIAITRFDDRIRVGGMAEIVGFDKRLRDARRGTLEMCVNDLFPGGGDTAKATFWTGLRPMTPDGTPIVGRTPVPNLFLNTGHGTLGWTMSCGSGQLLADLMSGKKPAIRADDLSVHRYLSETDGEHRPAYA.

3-17 is an FAD binding site; sequence VVILGSGVVGVASAY.

This sequence belongs to the DadA oxidoreductase family. It depends on FAD as a cofactor.

It carries out the reaction a D-alpha-amino acid + A + H2O = a 2-oxocarboxylate + AH2 + NH4(+). It participates in amino-acid degradation; D-alanine degradation; NH(3) and pyruvate from D-alanine: step 1/1. Oxidative deamination of D-amino acids. This Burkholderia mallei (strain NCTC 10247) protein is D-amino acid dehydrogenase.